The chain runs to 462 residues: Fumarate hydratase class II (462 aa).

Substrate contacts are provided by residues 97–99 (SGT), 127–130 (HPND), 137–139 (SSN), and Thr-185. His-186 (proton donor/acceptor) is an active-site residue. Ser-316 is an active-site residue. Substrate-binding positions include Ser-317 and 322 to 324 (KVN).

It belongs to the class-II fumarase/aspartase family. Fumarase subfamily. In terms of assembly, homotetramer.

It is found in the cytoplasm. It carries out the reaction (S)-malate = fumarate + H2O. Its pathway is carbohydrate metabolism; tricarboxylic acid cycle; (S)-malate from fumarate: step 1/1. Functionally, involved in the TCA cycle. Catalyzes the stereospecific interconversion of fumarate to L-malate. In Bacillus subtilis (strain 168), this protein is Fumarate hydratase class II.